A 521-amino-acid chain; its full sequence is GMP synthase [glutamine-hydrolyzing] (521 aa).

The Glutamine amidotransferase type-1 domain maps to 5 to 203; the sequence is KILILDFGSQ…VHEICGCGND (199 aa). Catalysis depends on cysteine 82, which acts as the Nucleophile. Catalysis depends on residues histidine 177 and glutamate 179. One can recognise a GMPS ATP-PPase domain in the interval 204 to 396; the sequence is WNMPDYISEA…LGLPHDMVYR (193 aa). 231-237 contributes to the ATP binding site; the sequence is SGGVDSS.

As to quaternary structure, homodimer.

The enzyme catalyses XMP + L-glutamine + ATP + H2O = GMP + L-glutamate + AMP + diphosphate + 2 H(+). It functions in the pathway purine metabolism; GMP biosynthesis; GMP from XMP (L-Gln route): step 1/1. Catalyzes the synthesis of GMP from XMP. This chain is GMP synthase [glutamine-hydrolyzing], found in Azoarcus sp. (strain BH72).